Reading from the N-terminus, the 199-residue chain is FMN-dependent NADH:quinone oxidoreductase 2 (199 aa).

FMN-binding positions include Ser10, 16–18, and 96–99; these read SVS and MYNF.

This sequence belongs to the azoreductase type 1 family. As to quaternary structure, homodimer. Requires FMN as cofactor.

It carries out the reaction 2 a quinone + NADH + H(+) = 2 a 1,4-benzosemiquinone + NAD(+). The catalysed reaction is N,N-dimethyl-1,4-phenylenediamine + anthranilate + 2 NAD(+) = 2-(4-dimethylaminophenyl)diazenylbenzoate + 2 NADH + 2 H(+). Quinone reductase that provides resistance to thiol-specific stress caused by electrophilic quinones. In terms of biological role, also exhibits azoreductase activity. Catalyzes the reductive cleavage of the azo bond in aromatic azo compounds to the corresponding amines. This chain is FMN-dependent NADH:quinone oxidoreductase 2, found in Pseudomonas fluorescens (strain ATCC BAA-477 / NRRL B-23932 / Pf-5).